The sequence spans 124 residues: MILNMLKGKIHRATVTQADLNYMGSITIDKTLIDAAGILENEKVQIVDNNNGARLETYVIPGKRDSGIICLNGAAARLVQPGDEIIIIAYAQIIESEAKTYKPKVVFVNDDNTIKEITNYEFNE.

Ser-25 acts as the Schiff-base intermediate with substrate; via pyruvic acid in catalysis. The residue at position 25 (Ser-25) is a Pyruvic acid (Ser). Residue Thr-57 coordinates substrate. The Proton donor role is filled by Tyr-58. 73-75 is a binding site for substrate; that stretch reads GAA.

It belongs to the PanD family. As to quaternary structure, heterooctamer of four alpha and four beta subunits. Pyruvate is required as a cofactor. Post-translationally, is synthesized initially as an inactive proenzyme, which is activated by self-cleavage at a specific serine bond to produce a beta-subunit with a hydroxyl group at its C-terminus and an alpha-subunit with a pyruvoyl group at its N-terminus.

The protein localises to the cytoplasm. The catalysed reaction is L-aspartate + H(+) = beta-alanine + CO2. It functions in the pathway cofactor biosynthesis; (R)-pantothenate biosynthesis; beta-alanine from L-aspartate: step 1/1. Functionally, catalyzes the pyruvoyl-dependent decarboxylation of aspartate to produce beta-alanine. The polypeptide is Aspartate 1-decarboxylase (Clostridium botulinum (strain Alaska E43 / Type E3)).